A 396-amino-acid polypeptide reads, in one-letter code: 1-deoxy-D-xylulose 5-phosphate reductoisomerase (396 aa).

The NADPH site is built by Thr-15, Gly-16, Ser-17, Ile-18, Gly-41, and Asn-129. 1-deoxy-D-xylulose 5-phosphate is bound at residue Lys-130. NADPH is bound at residue Glu-131. Mn(2+) is bound at residue Asp-155. 1-deoxy-D-xylulose 5-phosphate-binding residues include Ser-156, Glu-157, Ser-182, and His-205. Residue Glu-157 coordinates Mn(2+). Position 211 (Gly-211) interacts with NADPH. 1-deoxy-D-xylulose 5-phosphate-binding residues include Ser-218, Asn-223, Lys-224, and Glu-227. Residue Glu-227 coordinates Mn(2+).

The protein belongs to the DXR family. The cofactor is Mg(2+). Requires Mn(2+) as cofactor.

It catalyses the reaction 2-C-methyl-D-erythritol 4-phosphate + NADP(+) = 1-deoxy-D-xylulose 5-phosphate + NADPH + H(+). It participates in isoprenoid biosynthesis; isopentenyl diphosphate biosynthesis via DXP pathway; isopentenyl diphosphate from 1-deoxy-D-xylulose 5-phosphate: step 1/6. Catalyzes the NADPH-dependent rearrangement and reduction of 1-deoxy-D-xylulose-5-phosphate (DXP) to 2-C-methyl-D-erythritol 4-phosphate (MEP). The sequence is that of 1-deoxy-D-xylulose 5-phosphate reductoisomerase from Xanthomonas axonopodis pv. citri (strain 306).